The chain runs to 110 residues: Large ribosomal subunit protein uL24 (110 aa).

Belongs to the universal ribosomal protein uL24 family. As to quaternary structure, part of the 50S ribosomal subunit.

Its function is as follows. One of two assembly initiator proteins, it binds directly to the 5'-end of the 23S rRNA, where it nucleates assembly of the 50S subunit. One of the proteins that surrounds the polypeptide exit tunnel on the outside of the subunit. The protein is Large ribosomal subunit protein uL24 of Desulfovibrio desulfuricans (strain ATCC 27774 / DSM 6949 / MB).